The following is a 416-amino-acid chain: Cysteate synthase (416 aa).

Lys104 is modified (N6-(pyridoxal phosphate)lysine). Position 130 (Asn130) interacts with pyridoxal 5'-phosphate.

This sequence belongs to the threonine synthase family. Cysteate synthase subfamily. Homotrimer. The cofactor is pyridoxal 5'-phosphate.

The enzyme catalyses O-phospho-L-serine + sulfite + H(+) = L-cysteate + phosphate. Its pathway is cofactor biosynthesis; coenzyme M biosynthesis. Is inhibited by AP3 (DL-2-amino-3-phosphonopropionate) and, to a lesser extent, by L-aspartate or AP4 (DL-2-amino-4-phosphonobutyrate). Is also inhibited by EDTA in vitro. Its function is as follows. Specifically catalyzes the beta-elimination of phosphate from L-phosphoserine and the beta-addition of sulfite to the dehydroalanine intermediate to produce L-cysteate. Does not display threonine synthase activity like the paralog protein ThrC. This is Cysteate synthase from Methanosarcina acetivorans (strain ATCC 35395 / DSM 2834 / JCM 12185 / C2A).